Here is a 128-residue protein sequence, read N- to C-terminus: Glycine cleavage system H protein (128 aa).

The Lipoyl-binding domain maps to 24–105 (SLTIGVTDHA…AYAAWLFKLK (82 aa)). Residue lysine 65 is modified to N6-lipoyllysine.

This sequence belongs to the GcvH family. As to quaternary structure, the glycine cleavage system is composed of four proteins: P, T, L and H. (R)-lipoate is required as a cofactor.

Functionally, the glycine cleavage system catalyzes the degradation of glycine. The H protein shuttles the methylamine group of glycine from the P protein to the T protein. This is Glycine cleavage system H protein from Aromatoleum aromaticum (strain DSM 19018 / LMG 30748 / EbN1) (Azoarcus sp. (strain EbN1)).